We begin with the raw amino-acid sequence, 477 residues long: Ribulose bisphosphate carboxylase large chain (477 aa).

The propeptide occupies 1-2; that stretch reads MS. Proline 3 is modified (N-acetylproline). Lysine 14 carries the N6,N6,N6-trimethyllysine modification. Residues asparagine 123 and threonine 173 each coordinate substrate. Residue lysine 175 is the Proton acceptor of the active site. Lysine 177 is a substrate binding site. 3 residues coordinate Mg(2+): lysine 201, aspartate 203, and glutamate 204. Lysine 201 carries the N6-carboxylysine modification. Catalysis depends on histidine 294, which acts as the Proton acceptor. Substrate is bound by residues arginine 295, histidine 327, and serine 379.

Belongs to the RuBisCO large chain family. Type I subfamily. In terms of assembly, heterohexadecamer of 8 large chains and 8 small chains; disulfide-linked. The disulfide link is formed within the large subunit homodimers. Mg(2+) is required as a cofactor. Post-translationally, the disulfide bond which can form in the large chain dimeric partners within the hexadecamer appears to be associated with oxidative stress and protein turnover.

The protein localises to the plastid. It is found in the chloroplast. It carries out the reaction 2 (2R)-3-phosphoglycerate + 2 H(+) = D-ribulose 1,5-bisphosphate + CO2 + H2O. The catalysed reaction is D-ribulose 1,5-bisphosphate + O2 = 2-phosphoglycolate + (2R)-3-phosphoglycerate + 2 H(+). Its function is as follows. RuBisCO catalyzes two reactions: the carboxylation of D-ribulose 1,5-bisphosphate, the primary event in carbon dioxide fixation, as well as the oxidative fragmentation of the pentose substrate in the photorespiration process. Both reactions occur simultaneously and in competition at the same active site. This Nicotiana tomentosiformis (Tobacco) protein is Ribulose bisphosphate carboxylase large chain.